The primary structure comprises 443 residues: Tubulin beta chain (443 aa).

8 residues coordinate GTP: glutamine 11, glutamate 69, serine 138, glycine 142, threonine 143, glycine 144, asparagine 204, and asparagine 226. Glutamate 69 lines the Mg(2+) pocket. Positions 421-443 (EYQQYQDASAEEEGEFGEEEEEN) are disordered. The span at 429–443 (SAEEEGEFGEEEEEN) shows a compositional bias: acidic residues.

This sequence belongs to the tubulin family. In terms of assembly, dimer of alpha and beta chains. A typical microtubule is a hollow water-filled tube with an outer diameter of 25 nm and an inner diameter of 15 nM. Alpha-beta heterodimers associate head-to-tail to form protofilaments running lengthwise along the microtubule wall with the beta-tubulin subunit facing the microtubule plus end conferring a structural polarity. Microtubules usually have 13 protofilaments but different protofilament numbers can be found in some organisms and specialized cells. It depends on Mg(2+) as a cofactor.

It localises to the cytoplasm. Its subcellular location is the cytoskeleton. Its function is as follows. Tubulin is the major constituent of microtubules, a cylinder consisting of laterally associated linear protofilaments composed of alpha- and beta-tubulin heterodimers. Microtubules grow by the addition of GTP-tubulin dimers to the microtubule end, where a stabilizing cap forms. Below the cap, tubulin dimers are in GDP-bound state, owing to GTPase activity of alpha-tubulin. The protein is Tubulin beta chain (TUBB1) of Polytomella agilis (Quadriflagellate alga).